The sequence spans 269 residues: L-cystine-binding protein TcyJ (269 aa).

The signal sequence occupies residues 1-20 (MNKRKGLVLLLSVFALLGGG). The N-palmitoyl cysteine moiety is linked to residue C21. C21 carries the S-diacylglycerol cysteine lipid modification.

The protein belongs to the bacterial solute-binding protein 3 family. As to quaternary structure, the complex is composed of two ATP-binding proteins (TcyN), two transmembrane proteins (TcyL and TcyM) and two solute-binding proteins (TcyJ and TcyK).

It is found in the cell membrane. Its function is as follows. Part of the ABC transporter complex TcyJKLMN involved in L-cystine import. Is also involved in cystathionine, djenkolate, and S-methylcysteine transport. This is L-cystine-binding protein TcyJ (tcyJ) from Bacillus subtilis (strain 168).